Reading from the N-terminus, the 553-residue chain is Hydroxylamine reductase (553 aa).

[2Fe-2S] cluster-binding residues include Cys3, Cys6, Cys18, and Cys25. Hybrid [4Fe-2O-2S] cluster-binding residues include His249, Glu273, Cys317, Cys405, Cys433, Cys459, Glu493, and Lys495. Cys405 carries the post-translational modification Cysteine persulfide.

This sequence belongs to the HCP family. Requires [2Fe-2S] cluster as cofactor. The cofactor is hybrid [4Fe-2O-2S] cluster.

The protein resides in the cytoplasm. It catalyses the reaction A + NH4(+) + H2O = hydroxylamine + AH2 + H(+). In terms of biological role, catalyzes the reduction of hydroxylamine to form NH(3) and H(2)O. The chain is Hydroxylamine reductase from Mannheimia succiniciproducens (strain KCTC 0769BP / MBEL55E).